The sequence spans 378 residues: Ribosomal RNA large subunit methyltransferase G (378 aa).

Belongs to the methyltransferase superfamily. RlmG family.

It localises to the cytoplasm. The enzyme catalyses guanosine(1835) in 23S rRNA + S-adenosyl-L-methionine = N(2)-methylguanosine(1835) in 23S rRNA + S-adenosyl-L-homocysteine + H(+). Its function is as follows. Specifically methylates the guanine in position 1835 (m2G1835) of 23S rRNA. This chain is Ribosomal RNA large subunit methyltransferase G, found in Salmonella heidelberg (strain SL476).